Consider the following 876-residue polypeptide: Vacuolar protein sorting-associated protein 39 homolog (876 aa).

In terms of domain architecture, CNH spans 14-310; it reads GVQIESIAAY…KFLVHADKGT (297 aa). The stretch at 578 to 741 is one CHCR repeat; that stretch reads ELIEVESLPR…ILIPPTQPLY (164 aa).

This sequence belongs to the VAM6/VPS39 family. Part of the homotypic fusion and vacuole protein sorting (HOPS) complex, composed of Vps16A, car/Vps33A, dor/Vps18, Vps39, Vps11 and lt/Vps41. Interacts with Rab2 (GTP-bound form); the interaction is probably direct.

The protein localises to the cytoplasm. The protein resides in the lysosome membrane. Its subcellular location is the late endosome membrane. It localises to the late endosome. It is found in the lysosome. In terms of biological role, part of the homotypic fusion and vacuole protein sorting (HOPS) tethering complex involved in endo-lysosomal vesicle trafficking and lysosome biogenesis. The HOPS complex facilitates docking and fusion of lysosomes with late endosomes and several other types of vesicles. The HOPS complex is also involved in autophagy and crinophagy (the elimination of unused secretory granules through their fusion with lysosomes). The HOPS complex mediates autophagocitic flux, probably by binding autophagosome-associated Syx17/syntaxin 17, promoting assembly of the trans-SNARE complex and instigating autophagosome-lysosome fusion. Independent of Syx17/syntaxin 17, HOPS is involved in biosynthetic transport to lysosomes and lysosome-related organelles such as eye-pigment granules. Required for autophagocytosis-dependent remodeling of myofibrils and transverse-tubules (T-tubules) during metamorphosis. The chain is Vacuolar protein sorting-associated protein 39 homolog from Drosophila melanogaster (Fruit fly).